Consider the following 306-residue polypeptide: MSSNQIALKNLVSMETLSNEEVMALIKRGIEFKNGAKANYDEQHIVANLFFEPSTRTHKAFEVAELKLGCDLLDFDVKTSSVNKGETLYDTILTMSALGVDICVIRHPEVDYYKELVESPTITTSIVNGGDGSGQHPSQSLLDLMTIYQEFGHFEGLKVAIAGDLDHSRVAKSNMQILKRLGAELYFAGPEEWRSEEFSHYGEFVTIDEVVDKVDVMMFLRVQHERHDYESIFSKENYHRLHGLTQERYDRMKDTAILMHPAPVNRDVEIADHLVEAPKSRIVEQMTNGVFVRMAIIEAVLKGREK.

Positions 56 and 57 each coordinate carbamoyl phosphate. K84 provides a ligand contact to L-aspartate. 3 residues coordinate carbamoyl phosphate: R106, H136, and Q139. Positions 169 and 221 each coordinate L-aspartate. Residues A262 and P263 each coordinate carbamoyl phosphate.

The protein belongs to the aspartate/ornithine carbamoyltransferase superfamily. ATCase family. Heterododecamer (2C3:3R2) of six catalytic PyrB chains organized as two trimers (C3), and six regulatory PyrI chains organized as three dimers (R2).

It catalyses the reaction carbamoyl phosphate + L-aspartate = N-carbamoyl-L-aspartate + phosphate + H(+). It participates in pyrimidine metabolism; UMP biosynthesis via de novo pathway; (S)-dihydroorotate from bicarbonate: step 2/3. Functionally, catalyzes the condensation of carbamoyl phosphate and aspartate to form carbamoyl aspartate and inorganic phosphate, the committed step in the de novo pyrimidine nucleotide biosynthesis pathway. The sequence is that of Aspartate carbamoyltransferase catalytic subunit from Streptococcus gordonii (strain Challis / ATCC 35105 / BCRC 15272 / CH1 / DL1 / V288).